Consider the following 253-residue polypeptide: 4-hydroxy-tetrahydrodipicolinate reductase (253 aa).

Residues 8 to 13, Asp-34, 76 to 78, and 108 to 111 contribute to the NAD(+) site; these read GAKGRM, GTT, and APNF. His-138 serves as the catalytic Proton donor/acceptor. His-139 contributes to the (S)-2,3,4,5-tetrahydrodipicolinate binding site. Residue Lys-142 is the Proton donor of the active site. 148-149 lines the (S)-2,3,4,5-tetrahydrodipicolinate pocket; that stretch reads GT.

This sequence belongs to the DapB family.

It localises to the cytoplasm. It catalyses the reaction (S)-2,3,4,5-tetrahydrodipicolinate + NAD(+) + H2O = (2S,4S)-4-hydroxy-2,3,4,5-tetrahydrodipicolinate + NADH + H(+). It carries out the reaction (S)-2,3,4,5-tetrahydrodipicolinate + NADP(+) + H2O = (2S,4S)-4-hydroxy-2,3,4,5-tetrahydrodipicolinate + NADPH + H(+). It participates in amino-acid biosynthesis; L-lysine biosynthesis via DAP pathway; (S)-tetrahydrodipicolinate from L-aspartate: step 4/4. Catalyzes the conversion of 4-hydroxy-tetrahydrodipicolinate (HTPA) to tetrahydrodipicolinate. The protein is 4-hydroxy-tetrahydrodipicolinate reductase of Bifidobacterium animalis subsp. lactis (strain AD011).